We begin with the raw amino-acid sequence, 473 residues long: KLAGMTGTAKTEEEEFRNIYGMDVMVIPTNKPIARIDKPDLIYKTMEAKFRAVVNEIEEIHKKGQPVLVGTVSVETSELVSKLLNKRRVPHHVLNAKNHEREAEIIEGAGQQGAVTIATNMAGRGTDIKLGEGVRELGGLHVLGTERHESRRIDNQLRGRAGRQGDPGSSQFYLSMEDELMRRFGSDNMRSMMERLGMEEDQPIESRLVSRAVETAQKRVEGNNFDARKQILQYDDVMREQREIIYKQRMEVLESDNLRKIVETMIKDVIDRTVRLHTPENEVPEDWDLMAIVNYMNANLLQEGELEEKDIKGLDPEEMVEAITEKVIARYNEKEEQFTPEHMREFEKVIMLRTVDRKWMNHIDQMDQLRQGIHLRAYGQNDPLREYRFEGFEMFEAMIASIEEEVSMYIMKAQVQQNLERQKVAEGKAVHQDTSKQEPKKKQPIRKGETIGRNDACICGSGKKYKNCCGAGK.

Residue D127 participates in ATP binding. The disordered stretch occupies residues 424 to 447 (VAEGKAVHQDTSKQEPKKKQPIRK). Zn(2+) contacts are provided by C457, C459, C468, and C469.

Belongs to the SecA family. Monomer and homodimer. Part of the essential Sec protein translocation apparatus which comprises SecA, SecYEG and auxiliary proteins SecDF. Other proteins may also be involved. Zn(2+) is required as a cofactor.

Its subcellular location is the cell membrane. The protein localises to the cytoplasm. It carries out the reaction ATP + H2O + cellular proteinSide 1 = ADP + phosphate + cellular proteinSide 2.. Part of the Sec protein translocase complex. Interacts with the SecYEG preprotein conducting channel. Has a central role in coupling the hydrolysis of ATP to the transfer of proteins into and across the cell membrane, serving as an ATP-driven molecular motor driving the stepwise translocation of polypeptide chains across the membrane. The polypeptide is Protein translocase subunit SecA (Cytobacillus firmus (Bacillus firmus)).